The chain runs to 337 residues: Heat-inducible transcription repressor HrcA (337 aa).

This sequence belongs to the HrcA family.

Negative regulator of class I heat shock genes (grpE-dnaK-dnaJ and groELS operons). Prevents heat-shock induction of these operons. The protein is Heat-inducible transcription repressor HrcA of Nocardioides sp. (strain ATCC BAA-499 / JS614).